The chain runs to 258 residues: Imidazole glycerol phosphate synthase subunit HisF (258 aa).

Catalysis depends on residues D12 and D131.

The protein belongs to the HisA/HisF family. In terms of assembly, heterodimer of HisH and HisF.

Its subcellular location is the cytoplasm. The enzyme catalyses 5-[(5-phospho-1-deoxy-D-ribulos-1-ylimino)methylamino]-1-(5-phospho-beta-D-ribosyl)imidazole-4-carboxamide + L-glutamine = D-erythro-1-(imidazol-4-yl)glycerol 3-phosphate + 5-amino-1-(5-phospho-beta-D-ribosyl)imidazole-4-carboxamide + L-glutamate + H(+). Its pathway is amino-acid biosynthesis; L-histidine biosynthesis; L-histidine from 5-phospho-alpha-D-ribose 1-diphosphate: step 5/9. In terms of biological role, IGPS catalyzes the conversion of PRFAR and glutamine to IGP, AICAR and glutamate. The HisF subunit catalyzes the cyclization activity that produces IGP and AICAR from PRFAR using the ammonia provided by the HisH subunit. The protein is Imidazole glycerol phosphate synthase subunit HisF of Nitrosomonas eutropha (strain DSM 101675 / C91 / Nm57).